Here is a 753-residue protein sequence, read N- to C-terminus: Polyribonucleotide nucleotidyltransferase (753 aa).

The Mg(2+) site is built by D488 and D494. The 60-residue stretch at 555-614 (PRLLRTKISPDKIGALIGPGGKNIRGIQETTGAVIEVDDEGTVLVASSNKESAQEAMRQV) folds into the KH domain. In terms of domain architecture, S1 motif spans 624 to 692 (GKIYDGTVSS…EHDRVKLSRR (69 aa)). Residues 698–719 (LGEEDPLAVEGEGGGDSEGGGD) show a composition bias toward acidic residues. A disordered region spans residues 698–753 (LGEEDPLAVEGEGGGDSEGGGDGEDRPRRRRGGSGGGGGGGRGRGPRRSGGGRDRD). Over residues 730–740 (GSGGGGGGGRG) the composition is skewed to gly residues.

It belongs to the polyribonucleotide nucleotidyltransferase family. The cofactor is Mg(2+).

It localises to the cytoplasm. The enzyme catalyses RNA(n+1) + phosphate = RNA(n) + a ribonucleoside 5'-diphosphate. Its function is as follows. Involved in mRNA degradation. Catalyzes the phosphorolysis of single-stranded polyribonucleotides processively in the 3'- to 5'-direction. The protein is Polyribonucleotide nucleotidyltransferase of Rhodopirellula baltica (strain DSM 10527 / NCIMB 13988 / SH1).